Consider the following 1295-residue polypeptide: Protein glp-1 (1295 aa).

A signal peptide spans 1–15; the sequence is MRVLLILLAFFAPIA. The Extracellular portion of the chain corresponds to 16–764; that stretch reads SQLMGGECGR…NEIDEGWSRS (749 aa). EGF-like domains are found at residues 19 to 58, 117 to 152, 154 to 190, and 190 to 230; these read MGGE…AFCE, GVNP…SYCE, GIDH…RYCE, and ERTE…EFCN. 37 cysteine pairs are disulfide-bonded: Cys23/Cys35, Cys29/Cys46, Cys48/Cys57, Cys121/Cys131, Cys126/Cys140, Cys142/Cys151, Cys158/Cys169, Cys163/Cys178, Cys180/Cys189, Cys201/Cys206, Cys220/Cys229, Cys236/Cys248, Cys242/Cys257, Cys259/Cys268, Cys275/Cys286, Cys280/Cys296, Cys298/Cys307, Cys329/Cys342, Cys336/Cys347, Cys349/Cys358, Cys373/Cys384, Cys378/Cys394, Cys396/Cys405, Cys411/Cys422, Cys416/Cys431, Cys433/Cys442, Cys450/Cys461, Cys455/Cys467, Cys469/Cys478, Cys496/Cys519, Cys501/Cys514, Cys510/Cys526, Cys536/Cys560, Cys542/Cys555, Cys551/Cys567, Cys582/Cys595, and Cys591/Cys607. Residues 232–269 enclose the EGF-like 5; calcium-binding domain; sequence DKNECLIEETCVNNSTCFNLHGDFTCTCKPGYAGKYCE. Residues Asn244 and Asn245 are each glycosylated (N-linked (GlcNAc...) asparagine). 5 consecutive EGF-like domains span residues 271-308, 316-359, 369-406, 407-443, and 446-479; these read AIDM…QRCE, GGIH…DRCE, DIQS…LNCE, QHLL…DYCE, and DRQL…PTCE. The N-linked (GlcNAc...) asparagine glycan is linked to Asn333. Asn381 carries an N-linked (GlcNAc...) asparagine glycan. LNR repeat units follow at residues 496–532, 536–577, and 581–612; these read CEQR…GQRP, CQYP…CPAH, and HCIE…NGTE. N-linked (GlcNAc...) asparagine glycans are attached at residues Asn609 and Asn675. Residues 765-786 traverse the membrane as a helical segment; it reads QVILFACIAFLAFGTVVAGVIA. Residues 787-1295 are Cytoplasmic-facing; that stretch reads KNGPERSRKR…AEQMNGSFYC (509 aa). ANK repeat units lie at residues 961-990, 994-1023, 1030-1062, 1074-1103, and 1107-1136; these read DENT…NPTI, SERS…LLKE, NGMT…KLDY, KGRT…NKDK, and DGRT…SLGI. Residues 1177–1244 form a disordered region; it reads IVKSGHGAKS…TTSTPNRMET (68 aa). The segment covering 1201-1210 has biased composition (polar residues); that stretch reads KTPTSAASSR. The span at 1221-1239 shows a compositional bias: low complexity; the sequence is DGSFSSPSPHYYPTTTSTP.

In terms of assembly, interacts with sel-10. When activated, the glp-1/Notch intracellular domain (NICD) may become a component of a complex consisting of at least the NICD, lag-1 and lag-3. Upon binding its ligands, it is cleaved (S2 cleavage) in its extracellular domain, close to the transmembrane domain. S2 cleavage is probably mediated by the metalloproteases adm-4 and sup-17. It is then cleaved (S3 cleavage) downstream of its transmembrane domain, releasing it from the cell membrane; S3 cleavage requires a multiprotein gamma-secretase complex, which may include presenilin sel-12. As to expression, expressed in the distal mitotic region of the germ line. May be absent from the gonadal distal tip cell (DTC).

It localises to the cell membrane. The protein resides in the cell projection. Its subcellular location is the axon. It is found in the nucleus. Its function is as follows. Essential signaling protein which has a major role in germline and embryonic development; involved in cell fate decisions that require cell-cell interactions. Probable membrane-bound receptor for putative ligands lag-2 and apx-1. Upon ligand activation, and releasing from the cell membrane, the glp-1/Notch intracellular domain (NICD) probably forms a transcriptional activator complex with lag-1 and lag-3 and regulates expression of various genes; targets in the germline include lst-1 and sygl-1. Involved in the specification of the cell fates of the blastomeres, ABa and ABp. Proper signaling by glp-1 induces ABa descendants to produce anterior pharyngeal cells, and ABp descendants to adopt a different fate. Contributes to the establishment of the dorsal-ventral axis in early embryos. Required in postmitotic neurons in order to maintain the developmentally arrested larval state known as dauer, probably in response to lag-2. Regulates germ cell mitotic proliferation probably by regulating MAP kinase phosphatase lip-1 expression. Required for oocyte growth control. Plays a negative role in lifespan. The polypeptide is Protein glp-1 (Caenorhabditis elegans).